Here is a 339-residue protein sequence, read N- to C-terminus: uncharacterized protein (339 aa).

Positions 17, 19, 197, and 278 each coordinate Zn(2+). Aspartate 279 serves as a coordination point for substrate.

This sequence belongs to the metallo-dependent hydrolases superfamily. Adenosine and AMP deaminases family. Adenine deaminase type 2 subfamily. Requires Zn(2+) as cofactor.

Its subcellular location is the cytoplasm. The protein localises to the nucleus. This is an uncharacterized protein from Schizosaccharomyces pombe (strain 972 / ATCC 24843) (Fission yeast).